The primary structure comprises 31 residues: Monocyclic monoterpene ketone monooxygenase (31 aa).

20-25 (GAGFXG) contacts FAD.

Monomer. FAD is required as a cofactor.

It carries out the reaction 1-hydroxylimonen-2-one + NADPH + O2 = 3-isopropenyl-6-oxoheptanoate + NADP(+) + H2O. It catalyses the reaction (1R,4S)-1-hydroxylimonen-2-one + NADPH + O2 + H(+) = (4S,7S)-7-hydroxy-4-isopropenyl-7-methyloxepan-2-one + NADP(+) + H2O. The enzyme catalyses (1S,4R)-1-hydroxylimonen-2-one + NADPH + O2 + H(+) = (4R,7R)-7-hydroxy-4-isopropenyl-7-methyloxepan-2-one + NADP(+) + H2O. The catalysed reaction is (1R,4R)-dihydrocarvone + NADPH + O2 + H(+) = (4R,7R)-4-isopropenyl-7-methyloxepan-2-one + NADP(+) + H2O. It carries out the reaction (1S,4R)-menthone + NADPH + O2 + H(+) = (4S,7R)-7-isopropyl-4-methyloxepan-2-one + NADP(+) + H2O. It catalyses the reaction (1R,4S)-menthone + NADPH + O2 + H(+) = (4R,7S)-7-isopropyl-4-methyloxepan-2-one + NADP(+) + H2O. The enzyme catalyses (1S,4R)-isodihydrocarvone + NADPH + O2 + H(+) = (3S,6R)-6-isopropenyl-3-methyloxepan-2-one + NADP(+) + H2O. It functions in the pathway terpene metabolism; monoterpene degradation. Functionally, catalyzes the NADPH- and oxygen-dependent oxidation of the monocyclic monoterpene ketones 1-hydroxy-2-oxolimonene, dihydrocarvone and menthone. Is able to convert all enantiomers of these natural substrates with almost equal efficiency. Is thus involved in the conversion of the monocyclic monoterpene ketone intermediates formed in the degradation pathways of all stereoisomers of three different monocyclic monoterpenes, i.e. limonene, (dihydro)carveol and menthol, which likely make R.erythropolis able to grow on these compounds as the sole source of carbon and energy. This Rhodococcus erythropolis (Arthrobacter picolinophilus) protein is Monocyclic monoterpene ketone monooxygenase.